The following is a 464-amino-acid chain: Chromosomal replication initiator protein DnaA (464 aa).

Positions 1–82 (MKNAAELWHN…GSRLDIQFIE (82 aa)) are domain I, interacts with DnaA modulators. Positions 82 to 125 (EEGQAKHMLDRQNEEVEVMEVAPAKTKAQKTPKSSDELVMSELG) are domain II. The tract at residues 126-342 (QLNEKYTFDT…GALTRVIAYA (217 aa)) is domain III, AAA+ region. 4 residues coordinate ATP: G170, G172, K173, and T174. The domain IV, binds dsDNA stretch occupies residues 343-464 (NLVGRTIDPN…EQIKHELKHS (122 aa)).

This sequence belongs to the DnaA family. As to quaternary structure, oligomerizes as a right-handed, spiral filament on DNA at oriC.

The protein localises to the cytoplasm. Its function is as follows. Plays an essential role in the initiation and regulation of chromosomal replication. ATP-DnaA binds to the origin of replication (oriC) to initiate formation of the DNA replication initiation complex once per cell cycle. Binds the DnaA box (a 9 base pair repeat at the origin) and separates the double-stranded (ds)DNA. Forms a right-handed helical filament on oriC DNA; dsDNA binds to the exterior of the filament while single-stranded (ss)DNA is stabiized in the filament's interior. The ATP-DnaA-oriC complex binds and stabilizes one strand of the AT-rich DNA unwinding element (DUE), permitting loading of DNA polymerase. After initiation quickly degrades to an ADP-DnaA complex that is not apt for DNA replication. Binds acidic phospholipids. This chain is Chromosomal replication initiator protein DnaA, found in Exiguobacterium sibiricum (strain DSM 17290 / CCUG 55495 / CIP 109462 / JCM 13490 / 255-15).